Here is a 240-residue protein sequence, read N- to C-terminus: Rho GDP-dissociation inhibitor 1 (240 aa).

The tract at residues 1–66 is disordered; that stretch reads MSLVSGARDM…DDDSKLQLGP (66 aa).

The protein belongs to the Rho GDI family. As to quaternary structure, interacts with RAC-like GTP binding proteins ARAC5/ROP4 and ARAC3/ROP6.

The protein localises to the cytoplasm. Regulates the GDP/GTP exchange reaction of the Rho proteins by inhibiting the dissociation of GDP from them, and the subsequent binding of GTP to them. The polypeptide is Rho GDP-dissociation inhibitor 1 (GDI1) (Arabidopsis thaliana (Mouse-ear cress)).